The sequence spans 495 residues: Histidine--tRNA ligase (495 aa).

The protein belongs to the class-II aminoacyl-tRNA synthetase family. As to quaternary structure, homodimer.

The protein localises to the cytoplasm. It carries out the reaction tRNA(His) + L-histidine + ATP = L-histidyl-tRNA(His) + AMP + diphosphate + H(+). This Ruegeria pomeroyi (strain ATCC 700808 / DSM 15171 / DSS-3) (Silicibacter pomeroyi) protein is Histidine--tRNA ligase.